A 450-amino-acid polypeptide reads, in one-letter code: UDP-N-acetylmuramoylalanine--D-glutamate ligase (450 aa).

119 to 125 (GSNGKTT) is an ATP binding site.

Belongs to the MurCDEF family.

The protein localises to the cytoplasm. It catalyses the reaction UDP-N-acetyl-alpha-D-muramoyl-L-alanine + D-glutamate + ATP = UDP-N-acetyl-alpha-D-muramoyl-L-alanyl-D-glutamate + ADP + phosphate + H(+). Its pathway is cell wall biogenesis; peptidoglycan biosynthesis. Cell wall formation. Catalyzes the addition of glutamate to the nucleotide precursor UDP-N-acetylmuramoyl-L-alanine (UMA). The sequence is that of UDP-N-acetylmuramoylalanine--D-glutamate ligase from Bacillus cereus (strain G9842).